The chain runs to 156 residues: SsrA-binding protein (156 aa).

Belongs to the SmpB family.

It localises to the cytoplasm. Its function is as follows. Required for rescue of stalled ribosomes mediated by trans-translation. Binds to transfer-messenger RNA (tmRNA), required for stable association of tmRNA with ribosomes. tmRNA and SmpB together mimic tRNA shape, replacing the anticodon stem-loop with SmpB. tmRNA is encoded by the ssrA gene; the 2 termini fold to resemble tRNA(Ala) and it encodes a 'tag peptide', a short internal open reading frame. During trans-translation Ala-aminoacylated tmRNA acts like a tRNA, entering the A-site of stalled ribosomes, displacing the stalled mRNA. The ribosome then switches to translate the ORF on the tmRNA; the nascent peptide is terminated with the 'tag peptide' encoded by the tmRNA and targeted for degradation. The ribosome is freed to recommence translation, which seems to be the essential function of trans-translation. The polypeptide is SsrA-binding protein (Thermoanaerobacter pseudethanolicus (strain ATCC 33223 / 39E) (Clostridium thermohydrosulfuricum)).